The primary structure comprises 202 residues: MSTLIYVDKENGEPGIHVAPKDGLKLGSVPSVKALDGRSQVSTPHVGKMFDAPPALPKTARKALGTVNRATEKSVKTNGPLKQKQTTFSTKKITEKTVKAKSSVPASDDTYPEIEKFFPFNPLDFENFDLPEEHQIARLPLSGVPLMILDEERELEQLLHVGPPSPLKMPPLLWESNLLQSPSSILSTLDVELPPVCCDLDI.

A disordered region spans residues 36–55 (DGRSQVSTPHVGKMFDAPPA). Positions 61 to 64 (RKAL) match the D-box motif. 2 consecutive short sequence motifs (TEK-box) follow at residues 71-73 (TEK) and 94-96 (TEK). An SH3-binding motif is present at residues 163–173 (PPSPLKMPPLL). Position 165 is a phosphoserine; by CDK1 (Ser165).

The protein belongs to the securin family. As to quaternary structure, interacts with RPS10 and DNAJA1. Interacts with the caspase-like ESPL1, and prevents its protease activity probably by covering its active site. Interacts with TP53 and blocks its activity probably by blocking its binding to DNA. Interacts with the Ku 70 kDa subunit of ds-DNA kinase. Interacts with PTTG1IP. In terms of processing, phosphorylated at Ser-165 by CDK1 during mitosis. Phosphorylated in vitro by ds-DNA kinase. Post-translationally, ubiquitinated through 'Lys-11' linkage of ubiquitin moieties by the anaphase promoting complex (APC) at the onset of anaphase, conducting to its degradation. 'Lys-11'-linked ubiquitination is mediated by the E2 ligase UBE2C/UBCH10.

It localises to the cytoplasm. The protein resides in the nucleus. In terms of biological role, regulatory protein, which plays a central role in chromosome stability, in the p53/TP53 pathway, and DNA repair. Probably acts by blocking the action of key proteins. During the mitosis, it blocks Separase/ESPL1 function, preventing the proteolysis of the cohesin complex and the subsequent segregation of the chromosomes. At the onset of anaphase, it is ubiquitinated, conducting to its destruction and to the liberation of ESPL1. Its function is however not limited to a blocking activity, since it is required to activate ESPL1. Negatively regulates the transcriptional activity and related apoptosis activity of TP53. The negative regulation of TP53 may explain the strong transforming capability of the protein when it is overexpressed. May also play a role in DNA repair via its interaction with Ku, possibly by connecting DNA damage-response pathways with sister chromatid separation. In Bos taurus (Bovine), this protein is Securin (PTTG1).